The sequence spans 77 residues: Teretoxin Tan15.2 (77 aa).

Positions 1–21 are cleaved as a signal peptide; that stretch reads MTRLTVVFLAILVLLPLATSN. The propeptide occupies 22–40; sequence SGADEAPASLSDLLHRTKR.

In terms of processing, contains 4 disulfide bonds. In terms of tissue distribution, expressed by the venom duct.

The protein resides in the secreted. This chain is Teretoxin Tan15.2, found in Terebra anilis (Auger snail).